A 386-amino-acid polypeptide reads, in one-letter code: Succinate--CoA ligase [ADP-forming] subunit beta (386 aa).

The ATP-grasp domain maps to 9 to 244 (KEILRNFGVP…LDEEDPAEVE (236 aa)). Residues Lys-46, 53–55 (GRG), Glu-99, Ala-102, and Glu-107 each bind ATP. Mg(2+)-binding residues include Asn-199 and Asp-213. Substrate contacts are provided by residues Asn-264 and 321–323 (GIM).

This sequence belongs to the succinate/malate CoA ligase beta subunit family. Heterotetramer of two alpha and two beta subunits. Requires Mg(2+) as cofactor.

The enzyme catalyses succinate + ATP + CoA = succinyl-CoA + ADP + phosphate. It carries out the reaction GTP + succinate + CoA = succinyl-CoA + GDP + phosphate. Its pathway is carbohydrate metabolism; tricarboxylic acid cycle; succinate from succinyl-CoA (ligase route): step 1/1. Its function is as follows. Succinyl-CoA synthetase functions in the citric acid cycle (TCA), coupling the hydrolysis of succinyl-CoA to the synthesis of either ATP or GTP and thus represents the only step of substrate-level phosphorylation in the TCA. The beta subunit provides nucleotide specificity of the enzyme and binds the substrate succinate, while the binding sites for coenzyme A and phosphate are found in the alpha subunit. The chain is Succinate--CoA ligase [ADP-forming] subunit beta from Polaromonas sp. (strain JS666 / ATCC BAA-500).